The sequence spans 225 residues: UPF0725 protein At5g63820 (225 aa).

It belongs to the UPF0725 (EMB2204) family.

The protein is UPF0725 protein At5g63820 of Arabidopsis thaliana (Mouse-ear cress).